Here is an 836-residue protein sequence, read N- to C-terminus: Outer membrane usher protein PapC (836 aa).

An N-terminal signal peptide occupies residues 1–24 (MKDRIPFAVNNITCVILLSLFCNA). Cysteines 814 and 832 form a disulfide.

Belongs to the fimbrial export usher family.

The protein resides in the cell outer membrane. Involved in the export and assembly of pili subunits across the outer membrane. Forms a hexameric ring-shaped pore in the outer bacterial membrane. The 2 nanometer-diameter pore allows the passage of the thin tip fibrillum. As for the rod, it probably unwinds into linear fibers which would therefore be narrow enough to pass through the pore. The polypeptide is Outer membrane usher protein PapC (papC) (Escherichia coli).